The sequence spans 616 residues: Chaperone protein HtpG (616 aa).

Positions 1–333 (MKKQFDTEVN…CQDLPLNVSR (333 aa)) are a; substrate-binding. The segment at 334-542 (EILQQNKILS…SNDPTYQMQK (209 aa)) is b. The c stretch occupies residues 543–616 (IMLSMGQEVK…INEFIEKDFL (74 aa)).

Belongs to the heat shock protein 90 family. Homodimer.

Its subcellular location is the cytoplasm. In terms of biological role, molecular chaperone. Has ATPase activity. In Borreliella burgdorferi (strain ATCC 35210 / DSM 4680 / CIP 102532 / B31) (Borrelia burgdorferi), this protein is Chaperone protein HtpG.